A 167-amino-acid polypeptide reads, in one-letter code: MHWGTLCGFLWLWPYLFYVQAVPIQKVQDDTKTLIKTIVTRINDISHTQSVSSKQKVTGLDFIPGLHPILTLSKMDQTLAVYQQILTSMPSRNVIQISNDLENLRDLLHVLAFSKSCHLPWASGLETLDSLGGVLEASGYSTEVVALSRLQGSLQDMLWQLDLSPGC.

Residues 1 to 21 (MHWGTLCGFLWLWPYLFYVQA) form the signal peptide. Cys117 and Cys167 form a disulfide bridge.

This sequence belongs to the leptin family. As to quaternary structure, interacts with SIGLEC6. As to expression, adipose tissue is the main source of leptin. It is also produced by other peripheral tissues such as the skeletal muscle. Expressed by intercalated and striated tracts of submandibular and parotid salivary gland intralobular ducts. Detected by fundic epithelium of the gastric mucosa. Secreted into blood and gastric juice.

Its subcellular location is the secreted. Functionally, key player in the regulation of energy balance and body weight control. Once released into the circulation, has central and peripheral effects by binding LEPR, found in many tissues, which results in the activation of several major signaling pathways. In the hypothalamus, acts as an appetite-regulating factor that induces a decrease in food intake and an increase in energy consumption by inducing anorexinogenic factors and suppressing orexigenic neuropeptides, also regulates bone mass and secretion of hypothalamo-pituitary-adrenal hormones. In the periphery, increases basal metabolism, influences reproductive function, regulates pancreatic beta-cell function and insulin secretion, is pro-angiogenic for endothelial cell and affects innate and adaptive immunity. In the arcuate nucleus of the hypothalamus, activates by depolarization POMC neurons inducing FOS and SOCS3 expression to release anorexigenic peptides and inhibits by hyperpolarization NPY neurons inducing SOCS3 with a consequent reduction on release of orexigenic peptides. In addition to its known satiety inducing effect, has a modulatory role in nutrient absorption. In the intestine, reduces glucose absorption by enterocytes by activating PKC and leading to a sequential activation of p38, PI3K and ERK signaling pathways which exerts an inhibitory effect on glucose absorption. Acts as a growth factor on certain tissues, through the activation of different signaling pathways increases expression of genes involved in cell cycle regulation such as CCND1, via JAK2-STAT3 pathway, or VEGFA, via MAPK1/3 and PI3K-AKT1 pathways. May also play an apoptotic role via JAK2-STAT3 pathway and up-regulation of BIRC5 expression. Pro-angiogenic, has mitogenic activity on vascular endothelial cells and plays a role in matrix remodeling by regulating the expression of matrix metalloproteinases (MMPs) and tissue inhibitors of metalloproteinases (TIMPs). In innate immunity, modulates the activity and function of neutrophils by increasing chemotaxis and the secretion of oxygen radicals. Increases phagocytosis by macrophages and enhances secretion of pro-inflammatory mediators. Increases cytotoxic ability of NK cells. Plays a pro-inflammatory role, in synergy with IL1B, by inducing NOS2 which promotes the production of IL6, IL8 and Prostaglandin E2, through a signaling pathway that involves JAK2, PI3K, MAP2K1/MEK1 and MAPK14/p38. In adaptive immunity, promotes the switch of memory T-cells towards T helper-1 cell immune responses. Increases CD4(+)CD25(-) T-cell proliferation and reduces autophagy during TCR (T-cell receptor) stimulation, through MTOR signaling pathway activation and BCL2 up-regulation. In Homo sapiens (Human), this protein is Leptin.